Reading from the N-terminus, the 644-residue chain is Translation factor guf1, mitochondrial (644 aa).

A mitochondrion-targeting transit peptide spans 1–31 (MTLRRFSYTFQARILRGLQARPVFVLPSRSH). The tr-type G domain occupies 51-232 (VNIRNWAIIS…AIIQRVPHPI (182 aa)). Residues 60-67 (SHIDHGKS), 125-129 (DTPGH), and 179-182 (NKID) contribute to the GTP site.

Belongs to the TRAFAC class translation factor GTPase superfamily. Classic translation factor GTPase family. LepA subfamily.

The protein localises to the mitochondrion inner membrane. The enzyme catalyses GTP + H2O = GDP + phosphate + H(+). Its function is as follows. Promotes mitochondrial protein synthesis. May act as a fidelity factor of the translation reaction, by catalyzing a one-codon backward translocation of tRNAs on improperly translocated ribosomes. Binds to mitochondrial ribosomes in a GTP-dependent manner. The protein is Translation factor guf1, mitochondrial (guf1) of Schizosaccharomyces japonicus (strain yFS275 / FY16936) (Fission yeast).